A 154-amino-acid polypeptide reads, in one-letter code: Large ribosomal subunit protein uL24 (154 aa).

The disordered stretch occupies residues 97 to 154; sequence EIAARKNLPPPEVPEETSNDTKESDENVTGADKEETNEIKEEDLNDNEDKNNDGSQEA. Residues 115-135 show a composition bias toward basic and acidic residues; that stretch reads NDTKESDENVTGADKEETNEI.

Belongs to the universal ribosomal protein uL24 family. As to quaternary structure, part of the 50S ribosomal subunit.

In terms of biological role, one of two assembly initiator proteins, it binds directly to the 5'-end of the 23S rRNA, where it nucleates assembly of the 50S subunit. Located at the polypeptide exit tunnel on the outside of the subunit. The chain is Large ribosomal subunit protein uL24 from Picrophilus torridus (strain ATCC 700027 / DSM 9790 / JCM 10055 / NBRC 100828 / KAW 2/3).